The primary structure comprises 78 residues: Ferredoxin (78 aa).

4Fe-4S ferredoxin-type domains are found at residues 2-29 (FVIT…HEGP) and 30-59 (DQYY…QEEF). Cys8 and Cys16 together coordinate [3Fe-4S] cluster. Cys20, Cys39, Cys42, and Cys45 together coordinate [4Fe-4S] cluster. Cys49 lines the [3Fe-4S] cluster pocket.

Requires [3Fe-4S] cluster as cofactor. It depends on [4Fe-4S] cluster as a cofactor.

Ferredoxins are iron-sulfur proteins that transfer electrons in a wide variety of metabolic reactions. This chain is Ferredoxin, found in Alicyclobacillus acidocaldarius subsp. acidocaldarius (Bacillus acidocaldarius).